A 345-amino-acid chain; its full sequence is MVVKNSIKFNSQSERKSLEETKVPPIFGLPPDALDDKKPTSDFAVPIIDFAGVHKSREAVVEKIKAAAENWGIFQVINHGVPLSVLEEIQNGVVRFHEEDPEVKKSYFSLDLTKTFIYHNNFELYSSSAGNWRDSFVCYMDPDPSNPEDLPVACRDAMIGYSKHVMSLGGLLFELLSEALGLNSDTLKSMGCMKGLHMICHYYPPCPQPDQTLGTSKHSDNTFITILLQDNIGGLQILHQDCWVDVSPLPGALIINIGDFLQLMTNDKFISVDHRVLTNRVGPRISIACFFSSSMNPNSTVYGPIKELLSEENPPKYRDFTIPEYSKGYIEKGLDGTSHLSHYRI.

Residue Lys16 forms a Glycyl lysine isopeptide (Lys-Gly) (interchain with G-Cter in ubiquitin) linkage. The region spanning 194–293 is the Fe2OG dioxygenase domain; it reads KGLHMICHYY…RISIACFFSS (100 aa). Fe cation-binding residues include His218, Asp220, and His274. Residue Arg284 coordinates 2-oxoglutarate.

This sequence belongs to the iron/ascorbate-dependent oxidoreductase family. Fe(2+) is required as a cofactor.

This is 1-aminocyclopropane-1-carboxylate oxidase homolog 7 from Arabidopsis thaliana (Mouse-ear cress).